The primary structure comprises 144 residues: Large ribosomal subunit protein uL16 (144 aa).

A compositionally biased stretch (basic residues) spans 1–19 (MLLPKRVKYRRQHRPKTTG). Residues 1–23 (MLLPKRVKYRRQHRPKTTGRSKG) form a disordered region.

It belongs to the universal ribosomal protein uL16 family. As to quaternary structure, part of the 50S ribosomal subunit.

Functionally, binds 23S rRNA and is also seen to make contacts with the A and possibly P site tRNAs. The sequence is that of Large ribosomal subunit protein uL16 from Staphylococcus epidermidis (strain ATCC 35984 / DSM 28319 / BCRC 17069 / CCUG 31568 / BM 3577 / RP62A).